The primary structure comprises 423 residues: Histidine--tRNA ligase (423 aa).

This sequence belongs to the class-II aminoacyl-tRNA synthetase family. As to quaternary structure, homodimer.

It localises to the cytoplasm. It carries out the reaction tRNA(His) + L-histidine + ATP = L-histidyl-tRNA(His) + AMP + diphosphate + H(+). The protein is Histidine--tRNA ligase of Rhodococcus opacus (strain B4).